The chain runs to 386 residues: Putative prophage major tail sheath protein (386 aa).

It belongs to the myoviridae tail sheath protein family.

It is found in the secreted. The chain is Putative prophage major tail sheath protein from Pseudomonas aeruginosa (strain UCBPP-PA14).